We begin with the raw amino-acid sequence, 343 residues long: S-adenosylmethionine:tRNA ribosyltransferase-isomerase (343 aa).

It belongs to the QueA family. Monomer.

The protein resides in the cytoplasm. The enzyme catalyses 7-aminomethyl-7-carbaguanosine(34) in tRNA + S-adenosyl-L-methionine = epoxyqueuosine(34) in tRNA + adenine + L-methionine + 2 H(+). It participates in tRNA modification; tRNA-queuosine biosynthesis. Transfers and isomerizes the ribose moiety from AdoMet to the 7-aminomethyl group of 7-deazaguanine (preQ1-tRNA) to give epoxyqueuosine (oQ-tRNA). The protein is S-adenosylmethionine:tRNA ribosyltransferase-isomerase of Pseudoalteromonas translucida (strain TAC 125).